Reading from the N-terminus, the 88-residue chain is Large ribosomal subunit protein bL31B (88 aa).

Belongs to the bacterial ribosomal protein bL31 family. Type B subfamily. Part of the 50S ribosomal subunit.

This chain is Large ribosomal subunit protein bL31B, found in Bordetella bronchiseptica (strain ATCC BAA-588 / NCTC 13252 / RB50) (Alcaligenes bronchisepticus).